The following is a 293-amino-acid chain: ATP synthase subunit gamma, mitochondrial (293 aa).

The N-terminal 21 residues, 1-21 (MFALRTAARPAARSVGATRNY), are a transit peptide targeting the mitochondrion.

F-type ATP synthases have 2 components, the catalytic core F(1) and the membrane-embedded component F(0), linked together by a central stalk and a peripheral stalk. The central stalk, also called rotor shaft, is often seen as part of F(1). The peripheral stalk is seen as part of F(0). F(0) contains the membrane channel next to the rotor. F-type ATP synthases form dimers but each monomer functions independently in ATP generation. The dimer consists of 17 different polypeptides: ATP1 (subunit alpha, 3 molecules per monomer, part of F(1)), ATP2 (subunit beta, 3 copies per monomer, part of F(1)), ATP3 (subunit gamma, part of the central stalk), ATP4 (subunit b, part of the peripheral stalk), ATP5/OSCP (subunit 5/OSCP, part of the peripheral stalk), ATP6 (subunit a, part of the peripheral stalk), ATP7 (subunit d, part of the peripheral stalk), ATP8 (subunit 8, part of the peripheral stalk), OLI1 (subunit c, part of the rotor, 10 molecules per monomer), ATP14 (subunit h, part of the peripheral stalk), ATP15 (subunit epsilon, part of the central stalk), ATP16 (subunit delta, part of the central stalk), ATP17 (subunit f, part of the peripheral stalk), ATP18 (subunit i/j, part of the peripheral stalk), ATP19 (subunit k, dimer-specific, at interface between monomers), ATP20 (subunit g, at interface between monomers), TIM11 (subunit e, at interface between monomers).

The protein resides in the mitochondrion inner membrane. Mitochondrial membrane ATP synthase (F(1)F(0) ATP synthase or Complex V) produces ATP from ADP in the presence of a proton gradient across the membrane which is generated by electron transport complexes of the respiratory chain. F-type ATP synthases consist of two structural domains, F(1) - containing the extramembraneous catalytic core, and F(0) - containing the membrane proton channel, linked together by a central stalk and a peripheral stalk. During catalysis, ATP synthesis in the catalytic domain of F(1) is coupled via a rotary mechanism of the central stalk subunits to proton translocation. Part of the complex F(1) domain and the central stalk which is part of the complex rotary element. The gamma/ATP3 subunit protrudes into the catalytic domain formed of alpha/ATP1(3)beta/ATP2(3). Rotation of the central stalk against the surrounding alpha/ATP1(3)beta/ATP2(3) subunits leads to hydrolysis of ATP in three separate catalytic sites on the beta/ATP2 subunits. The chain is ATP synthase subunit gamma, mitochondrial from Yarrowia lipolytica (strain CLIB 122 / E 150) (Yeast).